The chain runs to 200 residues: Protein-methionine-sulfoxide reductase heme-binding subunit MsrQ (200 aa).

Transmembrane regions (helical) follow at residues 8–28 (ITWLKVALHLAAFLPLVWLFY), 54–74 (LLLATLLVTPLTRLLKQPLLI), 79–99 (LLGLWCFAWATLHLVSYSLLE), 116–136 (PYLTLGIVSWLILLALALTSF), and 153–173 (FIYLVAILAPIHYLWSVKILS).

This sequence belongs to the MsrQ family. Heterodimer of a catalytic subunit (MsrP) and a heme-binding subunit (MsrQ). It depends on FMN as a cofactor. The cofactor is heme b.

It localises to the cell inner membrane. In terms of biological role, part of the MsrPQ system that repairs oxidized periplasmic proteins containing methionine sulfoxide residues (Met-O), using respiratory chain electrons. Thus protects these proteins from oxidative-stress damage caused by reactive species of oxygen and chlorine generated by the host defense mechanisms. MsrPQ is essential for the maintenance of envelope integrity under bleach stress, rescuing a wide series of structurally unrelated periplasmic proteins from methionine oxidation. MsrQ provides electrons for reduction to the reductase catalytic subunit MsrP, using the quinone pool of the respiratory chain. The sequence is that of Protein-methionine-sulfoxide reductase heme-binding subunit MsrQ from Cronobacter sakazakii (strain ATCC BAA-894) (Enterobacter sakazakii).